The following is a 103-amino-acid chain: Small ribosomal subunit protein uS10 (103 aa).

It belongs to the universal ribosomal protein uS10 family. In terms of assembly, part of the 30S ribosomal subunit.

In terms of biological role, involved in the binding of tRNA to the ribosomes. This Persephonella marina (strain DSM 14350 / EX-H1) protein is Small ribosomal subunit protein uS10.